We begin with the raw amino-acid sequence, 286 residues long: Probable endonuclease 4 (286 aa).

Zn(2+) contacts are provided by His67, His107, Glu144, Asp178, His181, His215, Asp228, His230, and Glu260.

It belongs to the AP endonuclease 2 family. Zn(2+) is required as a cofactor.

The enzyme catalyses Endonucleolytic cleavage to 5'-phosphooligonucleotide end-products.. In terms of biological role, endonuclease IV plays a role in DNA repair. It cleaves phosphodiester bonds at apurinic or apyrimidinic (AP) sites, generating a 3'-hydroxyl group and a 5'-terminal sugar phosphate. The protein is Probable endonuclease 4 of Chloroflexus aggregans (strain MD-66 / DSM 9485).